We begin with the raw amino-acid sequence, 414 residues long: Mannan endo-1,4-beta-mannosidase 2 (414 aa).

The N-terminal stretch at 1 to 25 (MAYFQRLISCIFVLFLLSLAFACEA) is a signal peptide. 2 residues coordinate substrate: Trp95 and Asn210. Glu211 (proton donor) is an active-site residue. Position 288 (Tyr288) interacts with substrate. Glu328 (nucleophile) is an active-site residue. Trp370 provides a ligand contact to substrate.

Belongs to the glycosyl hydrolase 5 (cellulase A) family.

The protein localises to the secreted. The enzyme catalyses Random hydrolysis of (1-&gt;4)-beta-D-mannosidic linkages in mannans, galactomannans and glucomannans.. Functionally, possesses endo-beta-mannanase activity in vitro. May be involved in seed germination by weakening the endosperm cap prior to radicle emergence. This is Mannan endo-1,4-beta-mannosidase 2 (MAN2) from Solanum lycopersicum (Tomato).